We begin with the raw amino-acid sequence, 438 residues long: Thymidine phosphorylase (438 aa).

This sequence belongs to the thymidine/pyrimidine-nucleoside phosphorylase family. In terms of assembly, homodimer.

It catalyses the reaction thymidine + phosphate = 2-deoxy-alpha-D-ribose 1-phosphate + thymine. It functions in the pathway pyrimidine metabolism; dTMP biosynthesis via salvage pathway; dTMP from thymine: step 1/2. Its function is as follows. The enzymes which catalyze the reversible phosphorolysis of pyrimidine nucleosides are involved in the degradation of these compounds and in their utilization as carbon and energy sources, or in the rescue of pyrimidine bases for nucleotide synthesis. This is Thymidine phosphorylase from Sinorhizobium medicae (strain WSM419) (Ensifer medicae).